Here is a 96-residue protein sequence, read N- to C-terminus: Large ribosomal subunit protein eL43 (96 aa).

The C4-type zinc-finger motif lies at 41–62 (CPVCAFPKLKRVGTSIWVCDKC).

The protein belongs to the eukaryotic ribosomal protein eL43 family. Requires Zn(2+) as cofactor.

The protein is Large ribosomal subunit protein eL43 of Methanococcus maripaludis (strain C6 / ATCC BAA-1332).